We begin with the raw amino-acid sequence, 872 residues long: Leucine--tRNA ligase (872 aa).

The 'HIGH' region motif lies at 42–52 (PYPSGSLHMGH). The 'KMSKS' region motif lies at 634 to 638 (TMSKS). Lys637 contacts ATP.

This sequence belongs to the class-I aminoacyl-tRNA synthetase family.

It localises to the cytoplasm. It catalyses the reaction tRNA(Leu) + L-leucine + ATP = L-leucyl-tRNA(Leu) + AMP + diphosphate. The sequence is that of Leucine--tRNA ligase from Nostoc sp. (strain PCC 7120 / SAG 25.82 / UTEX 2576).